A 124-amino-acid polypeptide reads, in one-letter code: Small ribosomal subunit protein bS6 (124 aa).

Positions 101 to 124 (IMMKEVQREEARKSAQSDAPAVAA) are disordered. Residues 105–115 (EVQREEARKSA) show a composition bias toward basic and acidic residues.

This sequence belongs to the bacterial ribosomal protein bS6 family.

In terms of biological role, binds together with bS18 to 16S ribosomal RNA. This is Small ribosomal subunit protein bS6 from Polynucleobacter asymbioticus (strain DSM 18221 / CIP 109841 / QLW-P1DMWA-1) (Polynucleobacter necessarius subsp. asymbioticus).